We begin with the raw amino-acid sequence, 110 residues long: Parvalbumin alpha (110 aa).

EF-hand domains follow at residues 39 to 74 (KGPD…FTPN) and 78 to 110 (LSVK…VSES). The Ca(2+) site is built by Asp52, Asp54, Ser56, Phe58, Glu60, Glu63, Asp91, Asp93, Asp95, Lys97, and Glu102.

This sequence belongs to the parvalbumin family.

In terms of biological role, in muscle, parvalbumin is thought to be involved in relaxation after contraction. It binds two calcium ions. This is Parvalbumin alpha from Aquarana catesbeiana (American bullfrog).